Consider the following 230-residue polypeptide: Cysteine S-methyltransferase OspZ (230 aa).

Positions 49–52 (GITR) are interaction with host proteins TAB2, TAB3 and ZRANB3. Alanine 92, serine 98, arginine 107, glutamine 111, tyrosine 204, and glutamate 208 together coordinate S-adenosyl-L-methionine.

The protein belongs to the NleE/OspZ family. In terms of assembly, monomer.

It localises to the secreted. The protein localises to the host cytoplasm. Its subcellular location is the host nucleus. It catalyses the reaction L-cysteinyl-[protein] + S-adenosyl-L-methionine = S-methyl-L-cysteinyl-[protein] + S-adenosyl-L-homocysteine + H(+). Its function is as follows. Cysteine methyltransferase effector that inhibits host cell NF-kappa-B activation by preventing nuclear translocation of host protein RELA/p65. Acts by mediating cysteine methylation of host proteins TAB2 and TAB3: methylation of a conserved cysteine residue of the RanBP2-type zinc finger (NZF) of TAB2 and TAB3 disrupts zinc-binding, thereby inactivating the ubiquitin chain-binding activity of TAB2 and TAB3, leading to NF-kappa-B inactivation. Also mediates cysteine methylation of host protein ZRANB3, inactivating its ability to bind ubiquitin chains. This Shigella flexneri protein is Cysteine S-methyltransferase OspZ.